The chain runs to 1642 residues: DNA-directed RNA polymerase I subunit RPA1 (1642 aa).

Residues cysteine 66, cysteine 69, cysteine 75, and histidine 78 each coordinate Zn(2+). Mg(2+)-binding residues include aspartate 565, aspartate 567, and aspartate 569. The bridging helix stretch occupies residues 939-951 (PQDFFFHCMAGRE). Positions 1337 to 1428 (DADKDDDNDL…GNDNDGDDKA (92 aa)) are disordered. Positions 1340-1350 (KDDDNDLDNGD) are enriched in acidic residues. Residues 1351 to 1361 (EVGRSKAKAND) are compositionally biased toward basic and acidic residues. Acidic residues-rich tracts occupy residues 1362-1373 (DDSSDDNDDDDA) and 1386-1424 (KDYDDPDDVEELHDANDDDDEAEDEDDEEKGQDGNDNDG). Residues serine 1364 and serine 1365 each carry the phosphoserine modification.

The protein belongs to the RNA polymerase beta' chain family. Component of the RNA polymerase I (Pol I) complex consisting of at least 13 subunits. In terms of processing, phosphorylated.

Its subcellular location is the nucleus. It is found in the nucleolus. The catalysed reaction is RNA(n) + a ribonucleoside 5'-triphosphate = RNA(n+1) + diphosphate. Functionally, DNA-dependent RNA polymerase catalyzes the transcription of DNA into RNA using the four ribonucleoside triphosphates as substrates. Largest and catalytic core component of RNA polymerase I which synthesizes ribosomal RNA precursors. Forms the polymerase active center together with the second largest subunit. A single stranded DNA template strand of the promoter is positioned within the central active site cleft of Pol I. A bridging helix emanates from RPA1 and crosses the cleft near the catalytic site and is thought to promote translocation of Pol I by acting as a ratchet that moves the RNA-DNA hybrid through the active site by switching from straight to bent conformations at each step of nucleotide addition. In Drosophila melanogaster (Fruit fly), this protein is DNA-directed RNA polymerase I subunit RPA1 (RpI1).